Here is a 221-residue protein sequence, read N- to C-terminus: Protein myomaker (221 aa).

Residues 1–3 lie on the Extracellular side of the membrane; sequence MGT. A helical transmembrane segment spans residues 4-24; sequence VVAKLLLPTLSSLAFLPTVSI. Residues 25 to 29 are Cytoplasmic-facing; that stretch reads ATKRR. Residues 30–50 traverse the membrane as a helical segment; the sequence is FYMEAMVYLFTMFFVAFSHAC. Residues 51 to 64 are Extracellular-facing; the sequence is DGPGLSVLCFMRRD. Residues 65–85 traverse the membrane as a helical segment; that stretch reads ILEYFSIYGTALSMWVSLMAL. At 86–93 the chain is on the cytoplasmic side; sequence ADFDEPQR. Residues 94–110 form a helical membrane-spanning segment; sequence STFTMLGVLTIAVRTFH. The Extracellular portion of the chain corresponds to 111-113; that stretch reads DRW. The helical transmembrane segment at 114–134 threads the bilayer; the sequence is GYGVYSGPIGTATLIIAVKWL. Residues 135 to 153 are Cytoplasmic-facing; that stretch reads KKMKEKKGLYPDKSIYTQQ. Residues 154–174 form a helical membrane-spanning segment; that stretch reads IGPGLCFGALALMLRFFFEEW. Residue aspartate 175 is a topological domain, extracellular. The helical transmembrane segment at 176–196 threads the bilayer; the sequence is YTYVHSFYHCALAMSFVLLLP. The Cytoplasmic segment spans residues 197–221; it reads KVNKKAGNAGAPAKLTFSTLCCTCV. S-palmitoyl cysteine attachment occurs at residues cysteine 217 and cysteine 218.

Belongs to the TMEM8 family. Interacts with MYMX. Post-translationally, palmitoylated at the C-terminus; palmitoylation promotes localization to the Golgi apparatus. Specifically expressed in skeletal muscle during embryogenesis and adult muscle regeneration.

Its subcellular location is the cell membrane. The protein resides in the golgi apparatus membrane. Its function is as follows. Myoblast-specific protein that mediates myoblast fusion, an essential step for the formation of multi-nucleated muscle fibers. Actively participates in the membrane fusion reaction by mediating the mixing of cell membrane lipids (hemifusion) upstream of MYMX. Acts independently of MYMX. Involved in skeletal muscle regeneration in response to injury by mediating the fusion of satellite cells, a population of muscle stem cells, with injured myofibers. Also involved in skeletal muscle hypertrophy, probably by mediating the fusion of satellite cells with myofibers. In Mus musculus (Mouse), this protein is Protein myomaker.